The chain runs to 104 residues: Protein U9 (104 aa).

The polypeptide is Protein U9 (U9) (Homo sapiens (Human)).